A 358-amino-acid polypeptide reads, in one-letter code: Trace amine-associated receptor 7d (358 aa).

At 1 to 47 the chain is on the extracellular side; the sequence is MRVDDDRFPWDQDSILSRDLLSASSLQLCYENLNRSCVRSPYSPGPR. An N-linked (GlcNAc...) asparagine glycan is attached at Asn-34. Intrachain disulfides connect Cys-37–Cys-201 and Cys-120–Cys-205. A helical transmembrane segment spans residues 48 to 68; the sequence is LILYAVFGFGAVLAVCGNLMV. The Cytoplasmic portion of the chain corresponds to 69 to 83; that stretch reads MTSILHFRQLHSPAN. A helical transmembrane segment spans residues 84-104; sequence FLVASLACADFLVGLTVMPFS. Over 105–122 the chain is Extracellular; the sequence is MVRSVEGCWYFGDTYCKL. Residues 123 to 143 traverse the membrane as a helical segment; that stretch reads HTCFDVSFCYCSLFHLCFISV. The Cytoplasmic portion of the chain corresponds to 144-166; that stretch reads DRYIAVSDPLIYPTRFTASVSGK. The chain crosses the membrane as a helical span at residues 167-187; sequence CITFSWLLSIIYGFPLIYTGA. The Extracellular segment spans residues 188–212; that stretch reads SEAGLEDLVSALTCVGGCQIPMNQK. The chain crosses the membrane as a helical span at residues 213–233; it reads FVLINFLLFLVPTLVMMTVYS. At 234–274 the chain is on the cytoplasmic side; it reads KIFLIARQQAQNIEKMRKQTARASESYKDRVCKRERKAAKT. A helical membrane pass occupies residues 275 to 295; sequence LGIAVAAFLLSWLPYFIDSII. Over 296-309 the chain is Extracellular; the sequence is DAFLGFITPTYVYE. A helical transmembrane segment spans residues 310–333; it reads ILIWIVYYNSSMNPLIYAFFYPWF. Residues 334-358 are Cytoplasmic-facing; it reads RKATKLIVTGKILRENSSTINLFPE.

The protein belongs to the G-protein coupled receptor 1 family.

The protein resides in the cell membrane. In terms of biological role, olfactory receptor specific for N,N-dimethylalkylamines trace amines, such as N,N-dimethylcyclohexylamine. Trace amine compounds are enriched in animal body fluids and act on trace amine-associated receptors (TAARs) to elicit both intraspecific and interspecific innate behaviors. Ligand-binding causes a conformation change that triggers signaling via G(s)-class of G alpha proteins (GNAL or GNAS). The protein is Trace amine-associated receptor 7d of Rattus norvegicus (Rat).